The sequence spans 947 residues: DNA mismatch repair protein MutS 2 (947 aa).

Residues 623-643 (IPNDTHLGSGPVPASRDGSDD) form a disordered region. 659–666 (GPNMSGKS) serves as a coordination point for ATP. The disordered stretch occupies residues 841–916 (AETADTGVEA…GAAAEDELPE (76 aa)).

Belongs to the DNA mismatch repair MutS family.

Its function is as follows. This protein is involved in the repair of mismatches in DNA. It is possible that it carries out the mismatch recognition step. This protein has a weak ATPase activity. The polypeptide is DNA mismatch repair protein MutS 2 (Haloarcula marismortui (strain ATCC 43049 / DSM 3752 / JCM 8966 / VKM B-1809) (Halobacterium marismortui)).